A 377-amino-acid polypeptide reads, in one-letter code: ATP synthase gamma chain, chloroplastic (377 aa).

Residues 1-55 (MSCSNLTMLVSSKPSLSDSSALSFRSSVSPFQLPNHNTSGPSNPSRSSSVTPVHC) constitute a chloroplast transit peptide. Residues 30 to 52 (PFQLPNHNTSGPSNPSRSSSVTP) form a disordered region. The span at 37 to 52 (NTSGPSNPSRSSSVTP) shows a compositional bias: low complexity. The active site involves Cys-143. Cysteines 253 and 259 form a disulfide.

This sequence belongs to the ATPase gamma chain family. F-type ATPases have 2 components, CF(1) - the catalytic core - and CF(0) - the membrane proton channel. CF(1) has five subunits: alpha(3), beta(3), gamma(1), delta(1), epsilon(1). CF(0) has four main subunits: a, b, b' and c.

Its subcellular location is the plastid. It localises to the chloroplast thylakoid membrane. Its function is as follows. Produces ATP from ADP in the presence of a proton gradient across the membrane. The gamma chain is believed to be important in regulating ATPase activity and the flow of protons through the CF(0) complex. The sequence is that of ATP synthase gamma chain, chloroplastic (ATPC) from Nicotiana tabacum (Common tobacco).